The primary structure comprises 649 residues: Solute carrier family 22 member 17 (649 aa).

The tract at residues M1–S70 is disordered. The span at V24–V34 shows a compositional bias: polar residues. Residues Q47 to E57 show a composition bias toward basic and acidic residues. N-linked (GlcNAc...) asparagine glycosylation is found at N134 and N143. 11 helical membrane-spanning segments follow: residues V211–Y231, G240–G260, V265–L285, A300–V320, M330–S350, N414–R433, F448–V468, G477–W497, F526–A546, G557–L577, and F584–L604.

Belongs to the major facilitator (TC 2.A.1) superfamily. Organic cation transporter (TC 2.A.1.19) family. Expressed in brain.

The protein resides in the cell membrane. The protein localises to the vacuole membrane. Its function is as follows. Cell surface receptor for LCN2 (24p3) that plays a key role in iron homeostasis and transport. Able to bind iron-bound LCN2 (holo-24p3), followed by internalization of holo-24p3 and release of iron, thereby increasing intracellular iron concentration and leading to inhibition of apoptosis. Also binds iron-free LCN2 (apo-24p3), followed by internalization of apo-24p3 and its association with an intracellular siderophore, leading to iron chelation and iron transfer to the extracellular medium, thereby reducing intracellular iron concentration and resulting in apoptosis. This is Solute carrier family 22 member 17 (SLC22A17) from Homo sapiens (Human).